A 199-amino-acid polypeptide reads, in one-letter code: Recombination protein RecR (199 aa).

A C4-type zinc finger spans residues 57 to 72; the sequence is CSVCGNITEQDPCAIC. Residues 80–176 form the Toprim domain; that stretch reads STIMVVEEAK…KVTRLAAGLA (97 aa).

Belongs to the RecR family.

May play a role in DNA repair. It seems to be involved in an RecBC-independent recombinational process of DNA repair. It may act with RecF and RecO. This Lactobacillus delbrueckii subsp. bulgaricus (strain ATCC BAA-365 / Lb-18) protein is Recombination protein RecR.